The sequence spans 333 residues: Adenosine deaminase (333 aa).

2 residues coordinate Zn(2+): H12 and H14. Residues H14, D16, and G170 each coordinate substrate. Residue H197 coordinates Zn(2+). The active-site Proton donor is E200. A Zn(2+)-binding site is contributed by D278. D279 is a substrate binding site.

It belongs to the metallo-dependent hydrolases superfamily. Adenosine and AMP deaminases family. Adenosine deaminase subfamily. The cofactor is Zn(2+).

It catalyses the reaction adenosine + H2O + H(+) = inosine + NH4(+). The catalysed reaction is 2'-deoxyadenosine + H2O + H(+) = 2'-deoxyinosine + NH4(+). Functionally, catalyzes the hydrolytic deamination of adenosine and 2-deoxyadenosine. This chain is Adenosine deaminase, found in Klebsiella pneumoniae (strain 342).